A 457-amino-acid polypeptide reads, in one-letter code: Multidrug resistance protein MdtK (457 aa).

A run of 12 helical transmembrane segments spans residues 11 to 31, 46 to 66, 93 to 113, 127 to 147, 160 to 180, 188 to 208, 243 to 263, 283 to 301, 316 to 336, 357 to 377, 387 to 407, and 418 to 438; these read LLAL…MGVV, AVAV…GLLL, WLAL…DHVI, AVGF…FQVL, GMVI…IFIY, LGGV…FLMM, LPVA…ALLV, LMFM…RVGF, YTSM…TIVF, LMLL…GSGV, IFFI…YLLG, and PAGF…LMVL.

This sequence belongs to the multi antimicrobial extrusion (MATE) (TC 2.A.66.1) family. MdtK subfamily.

The protein localises to the cell inner membrane. Multidrug efflux pump that functions probably as a Na(+)/drug antiporter. This Yersinia pseudotuberculosis serotype O:1b (strain IP 31758) protein is Multidrug resistance protein MdtK.